We begin with the raw amino-acid sequence, 1031 residues long: Error-prone DNA polymerase (1031 aa).

It belongs to the DNA polymerase type-C family. DnaE2 subfamily.

It localises to the cytoplasm. It carries out the reaction DNA(n) + a 2'-deoxyribonucleoside 5'-triphosphate = DNA(n+1) + diphosphate. Its function is as follows. DNA polymerase involved in damage-induced mutagenesis and translesion synthesis (TLS). It is not the major replicative DNA polymerase. In Pseudomonas aeruginosa (strain ATCC 15692 / DSM 22644 / CIP 104116 / JCM 14847 / LMG 12228 / 1C / PRS 101 / PAO1), this protein is Error-prone DNA polymerase.